A 479-amino-acid polypeptide reads, in one-letter code: Protein kinase 2 (479 aa).

The interval 1–136 (MGKGQSKIKN…NGNDDEDEGP (136 aa)) is disordered. Composition is skewed to low complexity over residues 52 to 65 (AQQQ…TTAA) and 79 to 96 (IPAP…TPTI). Polar residues predominate over residues 102–115 (NTDNNNINGASNEA). One can recognise a Protein kinase domain in the interval 153-407 (FELLNVIGKG…GGEVKQHPWF (255 aa)). Residues 159–167 (IGKGSFGKV) and lysine 182 contribute to the ATP site. Aspartate 276 (proton acceptor) is an active-site residue. At threonine 309 the chain carries Phosphothreonine; by autocatalysis. Residues 408–479 (KNIDWEKLDR…TYVADSILKD (72 aa)) enclose the AGC-kinase C-terminal domain. Phosphothreonine is present on threonine 470.

It belongs to the protein kinase superfamily. AGC Ser/Thr protein kinase family. S6 kinase subfamily. Post-translationally, seems to be myristoylated.

The protein localises to the cytoplasm. The protein resides in the cell membrane. The catalysed reaction is L-seryl-[protein] + ATP = O-phospho-L-seryl-[protein] + ADP + H(+). It catalyses the reaction L-threonyl-[protein] + ATP = O-phospho-L-threonyl-[protein] + ADP + H(+). Required for morphogenesis during multicellular development. Phosphorylates talB, gefN, gefS, PI4P 5-kinase and gacQ. The sequence is that of Protein kinase 2 (pkgB) from Dictyostelium discoideum (Social amoeba).